The primary structure comprises 115 residues: Phosphoribosyl-AMP cyclohydrolase (115 aa).

D80 contributes to the Mg(2+) binding site. C81 is a Zn(2+) binding site. Positions 82 and 84 each coordinate Mg(2+). Zn(2+) is bound by residues C97 and C104.

This sequence belongs to the PRA-CH family. As to quaternary structure, homodimer. Mg(2+) serves as cofactor. It depends on Zn(2+) as a cofactor.

It localises to the cytoplasm. The enzyme catalyses 1-(5-phospho-beta-D-ribosyl)-5'-AMP + H2O = 1-(5-phospho-beta-D-ribosyl)-5-[(5-phospho-beta-D-ribosylamino)methylideneamino]imidazole-4-carboxamide. It participates in amino-acid biosynthesis; L-histidine biosynthesis; L-histidine from 5-phospho-alpha-D-ribose 1-diphosphate: step 3/9. Catalyzes the hydrolysis of the adenine ring of phosphoribosyl-AMP. This is Phosphoribosyl-AMP cyclohydrolase from Mycolicibacterium gilvum (strain PYR-GCK) (Mycobacterium gilvum (strain PYR-GCK)).